A 298-amino-acid polypeptide reads, in one-letter code: Protease HtpX homolog (298 aa).

2 consecutive transmembrane segments (helical) span residues 15–35 and 38–58; these read LIMVLFVVILTLVGAGLGYLF and SPWTGIIIALAGSLIYLLIMW. Position 143 (histidine 143) interacts with Zn(2+). Residue glutamate 144 is part of the active site. Histidine 147 provides a ligand contact to Zn(2+). The next 2 helical transmembrane spans lie at 153-173 and 197-217; these read ILLSTIGVVLVGVISFISGIA and IIFKVIAIVFVLILGPISASL. Position 227 (glutamate 227) interacts with Zn(2+).

It belongs to the peptidase M48B family. Zn(2+) is required as a cofactor.

The protein resides in the cell membrane. This Lactobacillus acidophilus (strain ATCC 700396 / NCK56 / N2 / NCFM) protein is Protease HtpX homolog.